The following is a 547-amino-acid chain: Varicidin biosynthesis cluster MFS-type transporer (547 aa).

Residues methionine 1 to aspartate 17 are compositionally biased toward polar residues. A disordered region spans residues methionine 1–glutamate 33. 11 helical membrane-spanning segments follow: residues leucine 47–serine 67, leucine 156–threonine 176, tryptophan 183–valine 203, alanine 224–glycine 244, serine 252–valine 272, isoleucine 296–tryptophan 316, isoleucine 330–valine 350, glycine 360–asparagine 382, alanine 392–alanine 412, isoleucine 422–alanine 442, and cysteine 503–tryptophan 523.

The protein belongs to the major facilitator superfamily. TCR/Tet family.

It is found in the cell membrane. Its function is as follows. MFS-type transporer; part of the gene cluster that mediates the biosynthesis of varicidin A, an antifungal natural product containing a cis-octahydrodecalin core. This is Varicidin biosynthesis cluster MFS-type transporer from Talaromyces variabilis (Penicillium variabile).